We begin with the raw amino-acid sequence, 145 residues long: uncharacterized protein (145 aa).

The dksA C4-type zinc-finger motif lies at 86–110 (CERCGEEIPEPRLCAIPWTRYCAKC).

This is an uncharacterized protein from Aquifex aeolicus (strain VF5).